A 152-amino-acid polypeptide reads, in one-letter code: Methylglyoxal synthase (152 aa).

Residues 6 to 152 enclose the MGS-like domain; it reads RTMATAKNIA…YQHYLNGRLK (147 aa). Substrate is bound by residues His19, Lys23, 45-48, and 65-66; these read TGTT and SG. Asp71 (proton donor/acceptor) is an active-site residue. Position 98 (His98) interacts with substrate.

The protein belongs to the methylglyoxal synthase family.

The enzyme catalyses dihydroxyacetone phosphate = methylglyoxal + phosphate. Its function is as follows. Catalyzes the formation of methylglyoxal from dihydroxyacetone phosphate. This Photorhabdus laumondii subsp. laumondii (strain DSM 15139 / CIP 105565 / TT01) (Photorhabdus luminescens subsp. laumondii) protein is Methylglyoxal synthase.